We begin with the raw amino-acid sequence, 433 residues long: Homeobox protein Hox-D3 (433 aa).

Disordered stretches follow at residues 44-198 (STPH…SKRV), 258-280 (GILHSPAGQSPERSPPLGGAAGH), and 401-433 (HHGPCDPHPTYTDLSAHHSSQGRLPEAPKLTHL). Positions 58–74 (SLDSDYPSSACSIQSSA) are enriched in polar residues. Gly residues predominate over residues 97–106 (NSQGGGGGNQ). Pro residues predominate over residues 116–132 (PPQPPPPPPPTLPPSSP). Low complexity predominate over residues 146 to 159 (GGLSASSSSSTISK). The Antp-type hexapeptide motif lies at 161–166 (IFPWMK). Residues 171 to 183 (NSKQKNSCATSGE) show a composition bias toward polar residues. The segment at residues 195-254 (SKRVRTAYTSAQLVELEKEFHFNRYLCRPRRVEMANLLNLTERQIKIWFQNRRMKYKKDQ) is a DNA-binding region (homeobox).

It belongs to the Antp homeobox family. As to expression, detected in adult kidney, but not in other adult tissues tested.

The protein localises to the nucleus. Sequence-specific transcription factor which is part of a developmental regulatory system that provides cells with specific positional identities on the anterior-posterior axis. The sequence is that of Homeobox protein Hox-D3 (Hoxd3) from Mus musculus (Mouse).